A 131-amino-acid polypeptide reads, in one-letter code: Proline-rich protein 3 (131 aa).

The interval Leu1–Lys77 is disordered. Over residues Met12–Gly25 the composition is skewed to pro residues. Residues Pro28–Trp44 show a composition bias toward gly residues. Residues Lys98–Ala126 form a C3H1-type zinc finger.

This chain is Proline-rich protein 3 (PRR3), found in Sus scrofa (Pig).